We begin with the raw amino-acid sequence, 276 residues long: NADH-cytochrome b5 reductase 2 (276 aa).

One can recognise an FAD-binding FR-type domain in the interval 15–127 (EAKYPLPLIE…RGPRGRLFYH (113 aa)). Lys17 carries the post-translational modification N6-acetyllysine. Tyr18 carries the post-translational modification Phosphotyrosine. Residues 107–137 (ENMK…IRPD) and 146–181 (LADH…RMSL) each bind FAD.

The protein belongs to the flavoprotein pyridine nucleotide cytochrome reductase family. Requires FAD as cofactor. Restricted expression.

It catalyses the reaction 2 Fe(III)-[cytochrome b5] + NADH = 2 Fe(II)-[cytochrome b5] + NAD(+) + H(+). Its function is as follows. NADH-cytochrome b5 reductases are involved in desaturation and elongation of fatty acids, cholesterol biosynthesis, drug metabolism, and, in erythrocyte, methemoglobin reduction. Responsible for NADH-dependent lucigenin chemiluminescence in spermatozoa by reducing both lucigenin and 2-[4-iodophenyl]-3-[4-nitrophenyl]-5-[2,4-disulfophenyl]-2H tetrazolium monosodium salt (WST-1). The polypeptide is NADH-cytochrome b5 reductase 2 (Homo sapiens (Human)).